Consider the following 345-residue polypeptide: L-rhamnose-proton symporter (345 aa).

Transmembrane regions (helical) follow at residues 4 to 24 (AITM…CFYA), 38 to 58 (WSVG…ALLL), 68 to 88 (FSAA…IGNI), 101 to 121 (MGIG…TPLL), 131 to 151 (TAGG…VAIV), 175 to 195 (LVLA…MDAA), 214 to 234 (LPSY…FCFI), 259 to 279 (VLLS…YAWG), 290 to 310 (ISWM…GLLL), and 323 to 343 (VLSL…LGMA).

It belongs to the L-rhamnose transporter (TC 2.A.7.6) family.

It localises to the cell inner membrane. The catalysed reaction is L-rhamnopyranose(in) + H(+)(in) = L-rhamnopyranose(out) + H(+)(out). Its function is as follows. Uptake of L-rhamnose across the cytoplasmic membrane with the concomitant transport of protons into the cell (symport system). The sequence is that of L-rhamnose-proton symporter from Cronobacter sakazakii (strain ATCC BAA-894) (Enterobacter sakazakii).